A 253-amino-acid chain; its full sequence is Imidazole glycerol phosphate synthase subunit HisF (253 aa).

Catalysis depends on residues Asp-11 and Asp-130.

This sequence belongs to the HisA/HisF family. As to quaternary structure, heterodimer of HisH and HisF.

Its subcellular location is the cytoplasm. The catalysed reaction is 5-[(5-phospho-1-deoxy-D-ribulos-1-ylimino)methylamino]-1-(5-phospho-beta-D-ribosyl)imidazole-4-carboxamide + L-glutamine = D-erythro-1-(imidazol-4-yl)glycerol 3-phosphate + 5-amino-1-(5-phospho-beta-D-ribosyl)imidazole-4-carboxamide + L-glutamate + H(+). It functions in the pathway amino-acid biosynthesis; L-histidine biosynthesis; L-histidine from 5-phospho-alpha-D-ribose 1-diphosphate: step 5/9. IGPS catalyzes the conversion of PRFAR and glutamine to IGP, AICAR and glutamate. The HisF subunit catalyzes the cyclization activity that produces IGP and AICAR from PRFAR using the ammonia provided by the HisH subunit. This Lysinibacillus sphaericus (strain C3-41) protein is Imidazole glycerol phosphate synthase subunit HisF.